The following is a 315-amino-acid chain: Neuroguidin (315 aa).

The residue at position 2 (Ala-2) is an N-acetylalanine. The stretch at 5–42 (EVLESDLPNAVALLKNLQEQVMAVTAQVQTLTKKVQAK) forms a coiled coil. A necessary for interaction with EIF4E region spans residues 41–174 (AKAYPTEKGL…KGTAKKYVPP (134 aa)). Phosphoserine is present on residues Ser-121, Ser-142, and Ser-143. A disordered region spans residues 123–174 (SENDPLRFKPHPSNMMSKLSSEDEEEDEAEEGQSGASGKKSGKGTAKKYVPP). Positions 144-153 (EDEEEDEAEE) are enriched in acidic residues. Residues 181–205 (YDETEAEREKKRLERAKRRALSSSV) are a coiled coil. A phosphoserine mark is found at Ser-204 and Ser-214. Residues 252-315 (SKREKGRRKR…RKKKGFRRRR (64 aa)) form a disordered region. Polar residues predominate over residues 264 to 276 (VMSSQLHSLTHFS). The span at 295–315 (TKKRKKIPKKGRKKKGFRRRR) shows a compositional bias: basic residues.

Belongs to the SAS10 family. As to quaternary structure, part of the small subunit (SSU) processome, composed of more than 70 proteins and the RNA chaperone small nucleolar RNA (snoRNA) U3. Interacts with CPEB1 and EIF4E.

It is found in the nucleus. It localises to the nucleolus. The protein resides in the chromosome. Its subcellular location is the centromere. The protein localises to the cytoplasm. It is found in the cell projection. It localises to the axon. The protein resides in the dendrite. Its subcellular location is the filopodium. Part of the small subunit (SSU) processome, first precursor of the small eukaryotic ribosomal subunit. During the assembly of the SSU processome in the nucleolus, many ribosome biogenesis factors, an RNA chaperone and ribosomal proteins associate with the nascent pre-rRNA and work in concert to generate RNA folding, modifications, rearrangements and cleavage as well as targeted degradation of pre-ribosomal RNA by the RNA exosome. Its dissociation from the complex determines the transition from state pre-A1 to state pre-A1*. Inhibits mRNA translation in a cytoplasmic polyadenylation element (CPE)-dependent manner. This Bos taurus (Bovine) protein is Neuroguidin (NGDN).